The primary structure comprises 152 residues: UPF0266 membrane protein ESA_01432 (152 aa).

3 helical membrane passes run 1–21 (MTLTDGVLVIFIIALLGWAIY), 45–65 (ADSLIFTGLVAILIWQNVASH), and 67–87 (ALLTTWLLGALGLLAIYLFWI).

The protein belongs to the UPF0266 family.

The protein resides in the cell inner membrane. In Cronobacter sakazakii (strain ATCC BAA-894) (Enterobacter sakazakii), this protein is UPF0266 membrane protein ESA_01432.